The following is a 262-amino-acid chain: Ribosomal RNA small subunit methyltransferase A (262 aa).

5 residues coordinate S-adenosyl-L-methionine: I18, G43, E65, D91, and N110.

It belongs to the class I-like SAM-binding methyltransferase superfamily. rRNA adenine N(6)-methyltransferase family. RsmA subfamily.

The protein localises to the cytoplasm. The catalysed reaction is adenosine(1518)/adenosine(1519) in 16S rRNA + 4 S-adenosyl-L-methionine = N(6)-dimethyladenosine(1518)/N(6)-dimethyladenosine(1519) in 16S rRNA + 4 S-adenosyl-L-homocysteine + 4 H(+). Its function is as follows. Specifically dimethylates two adjacent adenosines (A1518 and A1519) in the loop of a conserved hairpin near the 3'-end of 16S rRNA in the 30S particle. May play a critical role in biogenesis of 30S subunits. The polypeptide is Ribosomal RNA small subunit methyltransferase A (Ehrlichia canis (strain Jake)).